Here is a 143-residue protein sequence, read N- to C-terminus: Large ribosomal subunit protein uL15 (143 aa).

A disordered region spans residues 1–52; it reads MKLNTLAPAAGSKSAPKRLGRGIGSGLGKTSGKGHKGQKARSGGYHKVGFEG. Over residues 21–31 the composition is skewed to gly residues; it reads RGIGSGLGKTS.

This sequence belongs to the universal ribosomal protein uL15 family. As to quaternary structure, part of the 50S ribosomal subunit.

In terms of biological role, binds to the 23S rRNA. The protein is Large ribosomal subunit protein uL15 of Francisella tularensis subsp. tularensis (strain FSC 198).